Consider the following 61-residue polypeptide: Small ribosomal subunit protein uS14 (61 aa).

4 residues coordinate Zn(2+): cysteine 24, cysteine 27, cysteine 40, and cysteine 43.

This sequence belongs to the universal ribosomal protein uS14 family. Zinc-binding uS14 subfamily. Part of the 30S ribosomal subunit. Contacts proteins S3 and S10. It depends on Zn(2+) as a cofactor.

Binds 16S rRNA, required for the assembly of 30S particles and may also be responsible for determining the conformation of the 16S rRNA at the A site. In Moorella thermoacetica (strain ATCC 39073 / JCM 9320), this protein is Small ribosomal subunit protein uS14.